The sequence spans 263 residues: Neurovirulence factor ICP34.5 (263 aa).

Over residues 1–14 (MARRRRHRGPRRPR) the composition is skewed to basic residues. The segment at 1–16 (MARRRRHRGPRRPRPP) is required for nucleolar localization. 2 disordered regions span residues 1–128 (MARR…PFRL) and 149–190 (RRAG…PATP). Residues 24-35 (TAQSQVTSTPNS) show a composition bias toward polar residues. Residues 45–58 (AAPPPPPASGPPPS) are compositionally biased toward pro residues. The span at 73 to 83 (ASDDDDDDDWP) shows a compositional bias: acidic residues. Pro residues-rich tracts occupy residues 84-93 (DSPPPEPAPE) and 119-128 (SHPPSRPFRL). A Nuclear export signal motif is present at residues 128-137 (LPPRLALRLR). 10 repeat units span residues 161 to 163 (ATP), 164 to 166 (ATP), 167 to 169 (ATP), 170 to 172 (ATP), 173 to 175 (ATP), 176 to 178 (ATP), 179 to 181 (ATP), 182 to 184 (ATP), 185 to 187 (ATP), and 188 to 190 (ATP). Positions 161-190 (ATPATPATPATPATPATPATPATPATPATP) are 10 X 3 AA tandem repeats of A-T-P. Low complexity predominate over residues 164–190 (ATPATPATPATPATPATPATPATPATP). The tract at residues 190–203 (PARVRFSPHVRVRH) is interaction with host PPP1CA. Residues 205–263 (VVWASAARLARRGSWARERADRARFRRRVAEAEAVIGPCLGPEARARALARGAGPANSV) are important for interferon resistance. Positions 215–233 (RRGSWARERADRARFRRRV) match the Bipartite nuclear localization signal motif. Residues 233–248 (VAEAEAVIGPCLGPEA) are interaction with host EIF2S1/EIF-2ALPHA.

The protein belongs to the PPP1R15 family. In terms of assembly, interacts with host PPP1CA; this interaction to forms a high-molecular-weight complex that dephosphorylates EIF2S1/eIF-2alpha. Interacts with host EIF2S1/eIF-2alpha; this interaction is crucial for the specific dephosphorylation of EIF2S1/eIF-2alpha by PPP1CA. Binds to proliferating cell nuclear antigen (PCNA), which may release host cells from growth arrest and facilitate viral replication. Interacts (via N-terminus) with host C1QBP; this interaction allows C1QBP to be recruited to the inner nuclear membrane by ICP34.5. Interacts with host PRKCA. Interacts with protein UL31. Interacts with host STING/TMEM173; this interaction inhibits the intracellular DNA sensing pathway. Interacts with host BECN1; this interaction modulates host autophagy.

It is found in the host cytoplasm. Its subcellular location is the host nucleus. The protein resides in the host nucleolus. The protein localises to the virion. In terms of biological role, inhibits the establishment of the immune response and of the integrated stress response (ISR) in the infected cell. Plays essential roles in viral nuclear egress to mediate capsid transit across the nuclear membrane. Facilitates nuclear egress cooperatively with host C1QBP and protein kinase C/PKC to induce lamin A/C phosphorylation and subsequent reorganization. In turn, lamina disassembles and nuclear egress occurs. Recruits the serine/threonine protein phosphatase PPP1CA/PP1-alpha to dephosphorylate the translation initiation factor EIF2S1/eIF-2alpha, thereby couteracting the host shutoff of protein synthesis involving double-stranded RNA-dependent protein kinase EIF2AK2/PKR. In turn, controls host IRF3 activation and subsequently inhibits host interferon response. Controls the DNA sensing pathway by interacting with and inhibiting host STING/TMEM173. Also down-modulates the host MHC class II proteins cell surface expression. Acts as a neurovirulence factor that has a profound effect on the growth of the virus in central nervous system tissue, by interacting with host BECN1 and thereby antagonizing the host autophagy response. The protein is Neurovirulence factor ICP34.5 (RL1) of Human herpesvirus 1 (strain F) (HHV-1).